The primary structure comprises 474 residues: PRAME family member 8 (474 aa).

An LRR 1; degenerate repeat occupies 97–122; that stretch reads QSKLQVLDLRNVDENFCDIFSGATAS. The LRR 2; degenerate repeat unit spans residues 177 to 201; sequence HVCCKELQVFGMPIHSIIEVLNMVE. An LRR 3; degenerate repeat occupies 202–228; sequence LDCIQEVEVCCPWELSTLVKFAPYLGQ. Residues 229 to 264 form an LRR 4; degenerate repeat; it reads MRNLRKLVLFNIRASACIPPDNKGQFIARFTSQFLK. 5 LRR repeats span residues 265 to 290, 291 to 322, 323 to 341, 347 to 374, and 375 to 399; these read LDYFQNLSMHSVSFLEGHLDQLLRCL, QASLEMVVMTDCLLSESDLKHLSWCPSIRQLK, ELDLRGVTLTHFSPEPLTG, VATLQTLDLEDCGIMDSQLSAILPVLSR, and CSQLSTFSFCGNLISMAALENLLRH.

This sequence belongs to the PRAME family.

This chain is PRAME family member 8, found in Homo sapiens (Human).